The primary structure comprises 156 residues: Ribosomal RNA large subunit methyltransferase H (156 aa).

S-adenosyl-L-methionine is bound by residues leucine 73, glycine 104, and leucine 123–leucine 128.

The protein belongs to the RNA methyltransferase RlmH family. In terms of assembly, homodimer.

The protein localises to the cytoplasm. The enzyme catalyses pseudouridine(1915) in 23S rRNA + S-adenosyl-L-methionine = N(3)-methylpseudouridine(1915) in 23S rRNA + S-adenosyl-L-homocysteine + H(+). Functionally, specifically methylates the pseudouridine at position 1915 (m3Psi1915) in 23S rRNA. The chain is Ribosomal RNA large subunit methyltransferase H from Neisseria gonorrhoeae (strain NCCP11945).